A 122-amino-acid polypeptide reads, in one-letter code: Aspartate 1-decarboxylase (122 aa).

The Schiff-base intermediate with substrate; via pyruvic acid role is filled by S25. S25 is modified (pyruvic acid (Ser)). T57 is a substrate binding site. The active-site Proton donor is the Y58. 73–75 (GAA) contributes to the substrate binding site.

This sequence belongs to the PanD family. As to quaternary structure, heterooctamer of four alpha and four beta subunits. Requires pyruvate as cofactor. Post-translationally, is synthesized initially as an inactive proenzyme, which is activated by self-cleavage at a specific serine bond to produce a beta-subunit with a hydroxyl group at its C-terminus and an alpha-subunit with a pyruvoyl group at its N-terminus.

It localises to the cytoplasm. It catalyses the reaction L-aspartate + H(+) = beta-alanine + CO2. Its pathway is cofactor biosynthesis; (R)-pantothenate biosynthesis; beta-alanine from L-aspartate: step 1/1. Functionally, catalyzes the pyruvoyl-dependent decarboxylation of aspartate to produce beta-alanine. This chain is Aspartate 1-decarboxylase, found in Bordetella avium (strain 197N).